A 269-amino-acid chain; its full sequence is MTPLRILISNDDGVLAEGVRCLAAAAASRGHKVTVVCPDHERSATGHGLTIHTPIRAERVDELYGPGVTAWSCSGTPADCVKLALSELLAEKPDLVLSGVNHGPNLGTDVFCSGTVAAAMEGTLEGLPALAVSVACFQWRDFQAAAELAMDVAENALADNWPNNLLLNLNIPPCHPEQMGSLRWTRLSIRHYEEQFSRRVDPHSRTYFWLAGEVVKDLETAGDGPRDWPSDVAQIETNSPSLTPIQPDLFWRGDLSALPAACVANQPVR.

A divalent metal cation contacts are provided by aspartate 11, aspartate 12, serine 43, and asparagine 101.

It belongs to the SurE nucleotidase family. Requires a divalent metal cation as cofactor.

It is found in the cytoplasm. It carries out the reaction a ribonucleoside 5'-phosphate + H2O = a ribonucleoside + phosphate. In terms of biological role, nucleotidase that shows phosphatase activity on nucleoside 5'-monophosphates. In Prochlorococcus marinus (strain MIT 9303), this protein is 5'-nucleotidase SurE.